Here is a 452-residue protein sequence, read N- to C-terminus: Exodeoxyribonuclease 7 large subunit (452 aa).

It belongs to the XseA family. In terms of assembly, heterooligomer composed of large and small subunits.

It is found in the cytoplasm. It carries out the reaction Exonucleolytic cleavage in either 5'- to 3'- or 3'- to 5'-direction to yield nucleoside 5'-phosphates.. Its function is as follows. Bidirectionally degrades single-stranded DNA into large acid-insoluble oligonucleotides, which are then degraded further into small acid-soluble oligonucleotides. This is Exodeoxyribonuclease 7 large subunit from Bacillus thuringiensis (strain Al Hakam).